The sequence spans 332 residues: Glycerol-3-phosphate dehydrogenase [NAD(P)+] (332 aa).

The NADPH site is built by S11, W12, R32, R33, and K106. K106 and G136 together coordinate sn-glycerol 3-phosphate. A140 is a binding site for NADPH. Sn-glycerol 3-phosphate-binding residues include K191, D244, S254, R255, and N256. The active-site Proton acceptor is K191. R255 provides a ligand contact to NADPH. Residues V280 and E282 each coordinate NADPH.

This sequence belongs to the NAD-dependent glycerol-3-phosphate dehydrogenase family.

The protein resides in the cytoplasm. It carries out the reaction sn-glycerol 3-phosphate + NAD(+) = dihydroxyacetone phosphate + NADH + H(+). The enzyme catalyses sn-glycerol 3-phosphate + NADP(+) = dihydroxyacetone phosphate + NADPH + H(+). The protein operates within membrane lipid metabolism; glycerophospholipid metabolism. Catalyzes the reduction of the glycolytic intermediate dihydroxyacetone phosphate (DHAP) to sn-glycerol 3-phosphate (G3P), the key precursor for phospholipid synthesis. This chain is Glycerol-3-phosphate dehydrogenase [NAD(P)+], found in Corynebacterium kroppenstedtii (strain DSM 44385 / JCM 11950 / CIP 105744 / CCUG 35717).